The primary structure comprises 100 residues: Integration host factor subunit alpha (100 aa).

Residues 53–72 (FQLRDKPQRPGRNPKTGEEV) are disordered.

Belongs to the bacterial histone-like protein family. Heterodimer of an alpha and a beta chain.

In terms of biological role, this protein is one of the two subunits of integration host factor, a specific DNA-binding protein that functions in genetic recombination as well as in transcriptional and translational control. This is Integration host factor subunit alpha from Neisseria gonorrhoeae (strain ATCC 700825 / FA 1090).